The following is a 251-amino-acid chain: Ubiquinone/menaquinone biosynthesis C-methyltransferase UbiE (251 aa).

Residues Thr74, Asp95, and 123–124 (NA) each bind S-adenosyl-L-methionine.

It belongs to the class I-like SAM-binding methyltransferase superfamily. MenG/UbiE family.

It catalyses the reaction a 2-demethylmenaquinol + S-adenosyl-L-methionine = a menaquinol + S-adenosyl-L-homocysteine + H(+). The catalysed reaction is a 2-methoxy-6-(all-trans-polyprenyl)benzene-1,4-diol + S-adenosyl-L-methionine = a 5-methoxy-2-methyl-3-(all-trans-polyprenyl)benzene-1,4-diol + S-adenosyl-L-homocysteine + H(+). It participates in quinol/quinone metabolism; menaquinone biosynthesis; menaquinol from 1,4-dihydroxy-2-naphthoate: step 2/2. The protein operates within cofactor biosynthesis; ubiquinone biosynthesis. In terms of biological role, methyltransferase required for the conversion of demethylmenaquinol (DMKH2) to menaquinol (MKH2) and the conversion of 2-polyprenyl-6-methoxy-1,4-benzoquinol (DDMQH2) to 2-polyprenyl-3-methyl-6-methoxy-1,4-benzoquinol (DMQH2). This chain is Ubiquinone/menaquinone biosynthesis C-methyltransferase UbiE, found in Shewanella baltica (strain OS155 / ATCC BAA-1091).